Here is a 292-residue protein sequence, read N- to C-terminus: Phosphatidylglycerol--prolipoprotein diacylglyceryl transferase (292 aa).

Transmembrane regions (helical) follow at residues 25-45, 70-90, 101-121, 138-158, 193-213, and 255-275; these read IALH…WWYA, FVVW…VLVW, AIIA…GIII, FDIV…CNFI, FMEG…FKAL, and GFTY…YLLL. Position 153 (Arg153) interacts with a 1,2-diacyl-sn-glycero-3-phospho-(1'-sn-glycerol).

It belongs to the Lgt family.

The protein localises to the cell inner membrane. It catalyses the reaction L-cysteinyl-[prolipoprotein] + a 1,2-diacyl-sn-glycero-3-phospho-(1'-sn-glycerol) = an S-1,2-diacyl-sn-glyceryl-L-cysteinyl-[prolipoprotein] + sn-glycerol 1-phosphate + H(+). The protein operates within protein modification; lipoprotein biosynthesis (diacylglyceryl transfer). Catalyzes the transfer of the diacylglyceryl group from phosphatidylglycerol to the sulfhydryl group of the N-terminal cysteine of a prolipoprotein, the first step in the formation of mature lipoproteins. The chain is Phosphatidylglycerol--prolipoprotein diacylglyceryl transferase from Bartonella quintana (strain Toulouse) (Rochalimaea quintana).